The following is a 483-amino-acid chain: Regulatory protein ViaA (483 aa).

It belongs to the ViaA family. Homodimer. Interacts with RavA.

The protein localises to the cytoplasm. Its function is as follows. Component of the RavA-ViaA chaperone complex, which may act on the membrane to optimize the function of some of the respiratory chains. ViaA stimulates the ATPase activity of RavA. The protein is Regulatory protein ViaA of Shigella flexneri.